The sequence spans 315 residues: Methionyl-tRNA formyltransferase (315 aa).

Position 114 to 117 (114 to 117 (SLLP)) interacts with (6S)-5,6,7,8-tetrahydrofolate.

It belongs to the Fmt family.

The enzyme catalyses L-methionyl-tRNA(fMet) + (6R)-10-formyltetrahydrofolate = N-formyl-L-methionyl-tRNA(fMet) + (6S)-5,6,7,8-tetrahydrofolate + H(+). Functionally, attaches a formyl group to the free amino group of methionyl-tRNA(fMet). The formyl group appears to play a dual role in the initiator identity of N-formylmethionyl-tRNA by promoting its recognition by IF2 and preventing the misappropriation of this tRNA by the elongation apparatus. The chain is Methionyl-tRNA formyltransferase from Corynebacterium efficiens (strain DSM 44549 / YS-314 / AJ 12310 / JCM 11189 / NBRC 100395).